Here is a 164-residue protein sequence, read N- to C-terminus: Small ribosomal subunit protein uS9 (164 aa).

Belongs to the universal ribosomal protein uS9 family.

In Rickettsia bellii (strain OSU 85-389), this protein is Small ribosomal subunit protein uS9.